Consider the following 301-residue polypeptide: Lipoyl synthase (301 aa).

Residues Cys50, Cys55, Cys61, Cys76, Cys80, Cys83, and Ser289 each coordinate [4Fe-4S] cluster. Residues 62 to 278 enclose the Radical SAM core domain; sequence WNHRTATFLL…RRYALERGFR (217 aa).

It belongs to the radical SAM superfamily. Lipoyl synthase family. It depends on [4Fe-4S] cluster as a cofactor.

The protein localises to the cytoplasm. It catalyses the reaction [[Fe-S] cluster scaffold protein carrying a second [4Fe-4S](2+) cluster] + N(6)-octanoyl-L-lysyl-[protein] + 2 oxidized [2Fe-2S]-[ferredoxin] + 2 S-adenosyl-L-methionine + 4 H(+) = [[Fe-S] cluster scaffold protein] + N(6)-[(R)-dihydrolipoyl]-L-lysyl-[protein] + 4 Fe(3+) + 2 hydrogen sulfide + 2 5'-deoxyadenosine + 2 L-methionine + 2 reduced [2Fe-2S]-[ferredoxin]. It participates in protein modification; protein lipoylation via endogenous pathway; protein N(6)-(lipoyl)lysine from octanoyl-[acyl-carrier-protein]: step 2/2. Its function is as follows. Catalyzes the radical-mediated insertion of two sulfur atoms into the C-6 and C-8 positions of the octanoyl moiety bound to the lipoyl domains of lipoate-dependent enzymes, thereby converting the octanoylated domains into lipoylated derivatives. The protein is Lipoyl synthase of Roseiflexus sp. (strain RS-1).